The sequence spans 488 residues: L-arabinose isomerase 2 (488 aa).

The Mn(2+) site is built by Glu306, Glu331, His348, and His447.

This sequence belongs to the arabinose isomerase family. It depends on Mn(2+) as a cofactor.

It carries out the reaction beta-L-arabinopyranose = L-ribulose. Its pathway is carbohydrate degradation; L-arabinose degradation via L-ribulose; D-xylulose 5-phosphate from L-arabinose (bacterial route): step 1/3. Catalyzes the conversion of L-arabinose to L-ribulose. The polypeptide is L-arabinose isomerase 2 (Clostridium acetobutylicum (strain ATCC 824 / DSM 792 / JCM 1419 / IAM 19013 / LMG 5710 / NBRC 13948 / NRRL B-527 / VKM B-1787 / 2291 / W)).